The following is an 831-amino-acid chain: Glucan 1,3-beta-glucosidase D (831 aa).

A compositionally biased stretch (basic and acidic residues) spans 1 to 21; it reads MPSQSRSRDRYGRDSDRDRSR. Disordered regions lie at residues 1–246 and 261–288; these read MPSQ…RGQS and APDMEVRLRGGGRGPPRERRWEKDSDGS. Topologically, residues 1-300 are cytoplasmic; sequence MPSQSRSRDR…LTPFWKRKKW (300 aa). The segment covering 32–41 has biased composition (acidic residues); the sequence is EDDDDDDDFD. 3 stretches are compositionally biased toward basic and acidic residues: residues 42 to 70, 78 to 94, and 151 to 177; these read DNPRDRRYRRDGYRRAPVDSRAYDSHDDY, EPRRYRSDTERRRERAR, and DAARRLRRRERERERERRAETSKHKST. The segment covering 178-195 has biased composition (low complexity); sequence DSSNSSAGLLNANALAKL. Composition is skewed to basic and acidic residues over residues 197–216 and 275–286; these read AQHEELDRQEQRRAEKEAKA and PPRERRWEKDSD. The chain crosses the membrane as a helical; Signal-anchor for type II membrane protein span at residues 301 to 321; sequence WWIGAIVLVIVVIIIVVAVVV. Residues 322–831 are Extracellular-facing; that stretch reads SNNKKSDSDS…PSFGNLPEYY (510 aa). The segment at 325-360 is disordered; that stretch reads KKSDSDSDSDSNSGSSDSWGGDKSSLNGLDHDSIPK. The span at 334-350 shows a compositional bias: low complexity; that stretch reads DSNSGSSDSWGGDKSSL. N-linked (GlcNAc...) asparagine glycans are attached at residues asparagine 379, asparagine 396, and asparagine 547. Residue glutamate 598 is the Proton donor of the active site. Asparagine 611, asparagine 637, asparagine 670, and asparagine 690 each carry an N-linked (GlcNAc...) asparagine glycan. Glutamate 703 serves as the catalytic Nucleophile.

Belongs to the glycosyl hydrolase 5 (cellulase A) family.

The protein localises to the cell membrane. The enzyme catalyses Successive hydrolysis of beta-D-glucose units from the non-reducing ends of (1-&gt;3)-beta-D-glucans, releasing alpha-glucose.. Glucosidase involved in the degradation of cellulosic biomass. Active on lichenan. This Emericella nidulans (strain FGSC A4 / ATCC 38163 / CBS 112.46 / NRRL 194 / M139) (Aspergillus nidulans) protein is Glucan 1,3-beta-glucosidase D (exgD).